The sequence spans 836 residues: Phenylalanine--tRNA ligase beta subunit (836 aa).

In terms of domain architecture, tRNA-binding spans Pro44–Arg160. The region spanning Pro420–Thr495 is the B5 domain. Asp473, Asp479, Glu482, and Glu483 together coordinate Mg(2+). Residues Ser742–Arg835 enclose the FDX-ACB domain.

Belongs to the phenylalanyl-tRNA synthetase beta subunit family. Type 1 subfamily. Tetramer of two alpha and two beta subunits. The cofactor is Mg(2+).

It localises to the cytoplasm. It carries out the reaction tRNA(Phe) + L-phenylalanine + ATP = L-phenylalanyl-tRNA(Phe) + AMP + diphosphate + H(+). The chain is Phenylalanine--tRNA ligase beta subunit from Corynebacterium diphtheriae (strain ATCC 700971 / NCTC 13129 / Biotype gravis).